An 81-amino-acid polypeptide reads, in one-letter code: Mu/omega-theraphotoxin-Hs1a (81 aa).

An N-terminal signal peptide occupies residues 1–21 (MRASMFLALAGLVLLFVVCYA). A propeptide spanning residues 22-48 (SESEEKEFPRELLFKFFAVDDFKGEER) is cleaved from the precursor. 3 disulfides stabilise this stretch: cysteine 50–cysteine 65, cysteine 57–cysteine 70, and cysteine 64–cysteine 77.

The protein belongs to the neurotoxin 10 (Hwtx-1) family. 23 (HwTx-I) subfamily. Expressed by the venom gland.

The protein localises to the secreted. In terms of biological role, lethal toxin with multiple biological activities. Inhibits voltage-gated TTX-sensitive sodium channels in DRG neurons (IC(50)=55 nM) and also shows activity when directly tested on Nav1.7/SCN9A (IC(50)=25.1-630 nM). Inhibits N-type calcium channels (Cav2.2/CACNA1B (IC(50)=100 nM)). Also blocks neuromuscular transmission. In vivo, intrathecal injected toxin shows analgesic activity in the rat formalin-induced pain model, without induction of motor dysfunction in rats. The polypeptide is Mu/omega-theraphotoxin-Hs1a (Cyriopagopus schmidti (Chinese bird spider)).